A 444-amino-acid chain; its full sequence is Zinc finger protein ZIC 1 (444 aa).

Residues 222–257 (LICKWIEPEQLANPKKSCNKTFSTMHELVTHVTVEH) form a C2H2-type 1 zinc finger. Residues 271 to 293 (EECPREGKPFKAKYKLVNHIRVH) form a C2H2-type 2; degenerate zinc finger. C2H2-type zinc fingers lie at residues 299–323 (FPCPFPGCGKVFARSENLKIHKRTH), 329–353 (FKCEFEGCDRRFANSSDRKKHMHVH), and 359–381 (YLCKMCDKSYTHPSSLRKHMKVH). The disordered stretch occupies residues 372 to 432 (SSLRKHMKVH…SSAGHHTASH (61 aa)). Low complexity predominate over residues 383-432 (SSSQGSQPSPAASSGYESSTPPTIVSPSTENQTASSLSPSSSAGHHTASH).

The protein belongs to the GLI C2H2-type zinc-finger protein family.

It is found in the nucleus. The protein localises to the cytoplasm. Functionally, acts as a transcriptional activator. Involved in neurogenesis. Plays important roles in the early stage of organogenesis of the CNS, as well as during dorsal spinal cord development and maturation of the cerebellum. Binds to the minimal GLI-consensus sequence 5'-TGGGTGGTC-3'. This Gallus gallus (Chicken) protein is Zinc finger protein ZIC 1 (ZIC1).